The chain runs to 417 residues: Serine hydroxymethyltransferase (417 aa).

(6S)-5,6,7,8-tetrahydrofolate is bound by residues leucine 121 and 125-127; that span reads GHL. Lysine 229 carries the post-translational modification N6-(pyridoxal phosphate)lysine. 355–357 contacts (6S)-5,6,7,8-tetrahydrofolate; the sequence is SPF.

This sequence belongs to the SHMT family. In terms of assembly, homodimer. The cofactor is pyridoxal 5'-phosphate.

It localises to the cytoplasm. The enzyme catalyses (6R)-5,10-methylene-5,6,7,8-tetrahydrofolate + glycine + H2O = (6S)-5,6,7,8-tetrahydrofolate + L-serine. Its pathway is one-carbon metabolism; tetrahydrofolate interconversion. It functions in the pathway amino-acid biosynthesis; glycine biosynthesis; glycine from L-serine: step 1/1. Its function is as follows. Catalyzes the reversible interconversion of serine and glycine with tetrahydrofolate (THF) serving as the one-carbon carrier. This reaction serves as the major source of one-carbon groups required for the biosynthesis of purines, thymidylate, methionine, and other important biomolecules. Also exhibits THF-independent aldolase activity toward beta-hydroxyamino acids, producing glycine and aldehydes, via a retro-aldol mechanism. The sequence is that of Serine hydroxymethyltransferase from Shewanella baltica (strain OS185).